The following is a 365-amino-acid chain: Phosphate acyltransferase (365 aa).

It belongs to the PlsX family. In terms of assembly, homodimer. Probably interacts with PlsY.

Its subcellular location is the cytoplasm. It carries out the reaction a fatty acyl-[ACP] + phosphate = an acyl phosphate + holo-[ACP]. It participates in lipid metabolism; phospholipid metabolism. Functionally, catalyzes the reversible formation of acyl-phosphate (acyl-PO(4)) from acyl-[acyl-carrier-protein] (acyl-ACP). This enzyme utilizes acyl-ACP as fatty acyl donor, but not acyl-CoA. This Picosynechococcus sp. (strain ATCC 27264 / PCC 7002 / PR-6) (Agmenellum quadruplicatum) protein is Phosphate acyltransferase.